Reading from the N-terminus, the 542-residue chain is Global nitrogen regulator NrpR (542 aa).

The segment at 12–77 (IEILDILSKS…VITERGLEEL (66 aa)) is winged helix-turn-helix. 2 NRD regions span residues 85 to 320 (RLGS…KANI) and 321 to 542 (RIKT…YKEI).

Belongs to the NrpR family. As to quaternary structure, homodimer.

Its activity is regulated as follows. Under nitrogen limitation, binding of the intracellular nitrogen metabolite 2-oxoglutarate to NrpR decreases the binding affinity of NrpR to DNA, leading to initiation of transcription. Functionally, transcriptional repressor of nitrogen fixation and assimilation genes. Binds to two tandem operators in the glnA and nif promoters, thereby blocking transcription of the genes. In Methanocaldococcus jannaschii (strain ATCC 43067 / DSM 2661 / JAL-1 / JCM 10045 / NBRC 100440) (Methanococcus jannaschii), this protein is Global nitrogen regulator NrpR.